The sequence spans 157 residues: 2-C-methyl-D-erythritol 2,4-cyclodiphosphate synthase (157 aa).

A divalent metal cation contacts are provided by D8 and H10. 4-CDP-2-C-methyl-D-erythritol 2-phosphate-binding positions include 8–10 (DVH) and 34–35 (HS). Residue H42 coordinates a divalent metal cation. Residues 56–58 (DIG), 61–65 (FPDTD), 100–106 (AQAPKMA), 132–135 (TTTE), F139, and R142 each bind 4-CDP-2-C-methyl-D-erythritol 2-phosphate.

Belongs to the IspF family. As to quaternary structure, homotrimer. A divalent metal cation is required as a cofactor.

The catalysed reaction is 4-CDP-2-C-methyl-D-erythritol 2-phosphate = 2-C-methyl-D-erythritol 2,4-cyclic diphosphate + CMP. It participates in isoprenoid biosynthesis; isopentenyl diphosphate biosynthesis via DXP pathway; isopentenyl diphosphate from 1-deoxy-D-xylulose 5-phosphate: step 4/6. Involved in the biosynthesis of isopentenyl diphosphate (IPP) and dimethylallyl diphosphate (DMAPP), two major building blocks of isoprenoid compounds. Catalyzes the conversion of 4-diphosphocytidyl-2-C-methyl-D-erythritol 2-phosphate (CDP-ME2P) to 2-C-methyl-D-erythritol 2,4-cyclodiphosphate (ME-CPP) with a corresponding release of cytidine 5-monophosphate (CMP). This is 2-C-methyl-D-erythritol 2,4-cyclodiphosphate synthase from Edwardsiella ictaluri (strain 93-146).